A 42-amino-acid polypeptide reads, in one-letter code: Potassium channel toxin gamma-KTx 1.3 (42 aa).

4 disulfides stabilise this stretch: cysteine 5/cysteine 23, cysteine 11/cysteine 34, cysteine 20/cysteine 39, and cysteine 24/cysteine 41.

The protein belongs to the ergtoxin family. Gamma-KTx 1 subfamily. Expressed by the venom gland.

The protein resides in the secreted. Functionally, blocks Kv11/ERG potassium channels. The sequence is that of Potassium channel toxin gamma-KTx 1.3 from Centruroides gracilis (Slenderbrown scorpion).